Reading from the N-terminus, the 177-residue chain is Bifunctional protein PyrR (177 aa).

The short motif at 99–111 is the PRPP-binding element; the sequence is VILVDDVIYKGRT.

The protein belongs to the purine/pyrimidine phosphoribosyltransferase family. PyrR subfamily.

It catalyses the reaction UMP + diphosphate = 5-phospho-alpha-D-ribose 1-diphosphate + uracil. Regulates the transcription of the pyrimidine nucleotide (pyr) operon in response to exogenous pyrimidines. Functionally, also displays a weak uracil phosphoribosyltransferase activity which is not physiologically significant. This is Bifunctional protein PyrR from Microcystis aeruginosa (strain NIES-843 / IAM M-2473).